Here is a 634-residue protein sequence, read N- to C-terminus: MLSSCRAVTSMSRWSKHKKTKEVISMLSHNQKPNSWKILWRLIKSVQGRTSSKVLYVMVCAIFGILTGVTNSILLAQGLGFIFPTTNTETDGIQSVYLLVFAHNLPVMERLTIVCVTVVVAYILIFSFNVAQNYLGLKLYQEICALLRWKAYLKIQSMSTSFFDTQNNGDLMSRLTNDVYNINNLYAQVGGQTIQSLFILMTTATILFVLSPVIALISLTVLIALIALSFLFLKKARAAYAKVQNNLGDMSGYIEEVLSNHKVVHVLKLQEVMIDNFDKYNRPMVNPTIKANTYAVFIYSWFGFISNITYLASISIATAFSVNNIPSFGVSAINYSFMLSYIAALRQTALPLNQIFSLWNLIQLGIVSGERVFKILDLESPQKQATITKLPNIKGNIRFEKVVFGYSADKPILTGIDFSVKHGDIVAIVGPTGAGKSTIINLLMKFYKPFAGKIYMDNFEISEVSETAWREKISIVLQDPFLFSGTIKENIRMGRQDATDEEIIEACKVANAHDFIMRLPQGYNTFISNKTDYLSVGERQLLTIARAVIRNAPVLLLDEATSSIDVHSEKLIQQSIGRLMKDKTSFIISHRLSIIRNATLIIVINDGKVLEMGNHEQLMRQNGFYARLKRSAVK.

The next 6 helical transmembrane spans lie at 54–74 (VLYV…NSIL), 111–131 (LTIV…FNVA), 189–209 (VGGQ…ILFV), 213–233 (VIAL…FLFL), 296–316 (VFIY…SISI), and 325–345 (IPSF…IAAL). The 311-residue stretch at 54–364 (VLYVMVCAIF…IFSLWNLIQL (311 aa)) folds into the ABC transmembrane type-1 domain. Residues 397-631 (IRFEKVVFGY…NGFYARLKRS (235 aa)) form the ABC transporter domain. ATP is bound at residue 430–437 (GPTGAGKS).

Belongs to the ABC transporter superfamily.

It localises to the cell membrane. This is Putative ABC transporter ATP-binding protein MG015 homolog from Mycoplasma pneumoniae (strain ATCC 29342 / M129 / Subtype 1) (Mycoplasmoides pneumoniae).